Reading from the N-terminus, the 957-residue chain is Thioredoxin domain-containing protein 11 (957 aa).

Over residues 1-13 (MSECGGRGGGGGS) the composition is skewed to gly residues. Residues 1-47 (MSECGGRGGGGGSSSSSDDAEDEGGGGGPAGSGSLSPAPAASSEGRL) are disordered. The span at 32–44 (SGSLSPAPAASSE) shows a compositional bias: low complexity. Residues 64 to 84 (LLCGAVALGCALLLALKFTCS) form a helical membrane-spanning segment. A Thioredoxin 1 domain is found at 91–213 (IPAKPPVSFF…IEKFVRRVMK (123 aa)). Disulfide bonds link Cys-441–Cys-444 and Cys-691–Cys-694. The Thioredoxin 2 domain occupies 621-771 (LDPKQALMKF…LLRFILHHSD (151 aa)). Residues 785-889 (AECLQNEAVL…ADASETLLTE (105 aa)) adopt a coiled-coil conformation. Basic and acidic residues predominate over residues 904–925 (LEGRDGADDRVPPSKARSEHPE). A disordered region spans residues 904 to 957 (LEGRDGADDRVPPSKARSEHPEPPGAPRLPASTPLPANISSTLASEGSPENRTD). Residues 941–951 (NISSTLASEGS) show a composition bias toward polar residues.

Belongs to the protein disulfide isomerase family. As to quaternary structure, interacts with the cytoplasmic part of DUOX1 and DUOX2. Interacts with TPO and CYBA.

The protein localises to the endoplasmic reticulum membrane. In terms of biological role, may act as a redox regulator involved in DUOX proteins folding. The interaction with DUOX1 and DUOX2 suggest that it belongs to a multiprotein complex constituting the thyroid H(2)O(2) generating system. It is however not sufficient to assist DUOX1 and DUOX2 in H(2)O(2) generation. The sequence is that of Thioredoxin domain-containing protein 11 (TXNDC11) from Bos taurus (Bovine).